A 260-amino-acid chain; its full sequence is Snake venom serine protease 2B (260 aa).

The signal sequence occupies residues 1–18; sequence MVLIRVLANLLILQLSYA. Positions 19–24 are excised as a propeptide; that stretch reads QKSSEL. In terms of domain architecture, Peptidase S1 spans 25-251; the sequence is VVGGDECNIN…HLDWIQSIIA (227 aa). 6 cysteine pairs are disulfide-bonded: Cys31–Cys165, Cys52–Cys68, Cys102–Cys258, Cys144–Cys212, Cys176–Cys191, and Cys202–Cys227. His67 functions as the Charge relay system in the catalytic mechanism. Residues Asn101 and Asn105 are each glycosylated (N-linked (GlcNAc...) asparagine). The active-site Charge relay system is Asp112. N-linked (GlcNAc...) asparagine glycosylation is found at Asn123 and Asn156. Residue Ser206 is the Charge relay system of the active site.

This sequence belongs to the peptidase S1 family. Snake venom subfamily. In terms of assembly, monomer. As to expression, expressed by the venom gland.

The protein resides in the secreted. Functionally, snake venom serine protease that may act in the hemostasis system of the prey. The chain is Snake venom serine protease 2B (TLG2B) from Craspedocephalus gramineus (Bamboo pit viper).